Reading from the N-terminus, the 281-residue chain is Urease accessory protein UreD (281 aa).

The disordered stretch occupies residues 1–25; that stretch reads MLNTLEPQPCETDALSPRLQRSTGS.

Belongs to the UreD family. UreD, UreF and UreG form a complex that acts as a GTP-hydrolysis-dependent molecular chaperone, activating the urease apoprotein by helping to assemble the nickel containing metallocenter of UreC. The UreE protein probably delivers the nickel.

Its subcellular location is the cytoplasm. Its function is as follows. Required for maturation of urease via the functional incorporation of the urease nickel metallocenter. The sequence is that of Urease accessory protein UreD from Dinoroseobacter shibae (strain DSM 16493 / NCIMB 14021 / DFL 12).